Consider the following 165-residue polypeptide: Chorismate pyruvate-lyase (165 aa).

Residues M35, R77, L115, and E156 each contribute to the substrate site.

It belongs to the UbiC family. In terms of assembly, monomer.

It is found in the cytoplasm. The enzyme catalyses chorismate = 4-hydroxybenzoate + pyruvate. The protein operates within cofactor biosynthesis; ubiquinone biosynthesis. Removes the pyruvyl group from chorismate, with concomitant aromatization of the ring, to provide 4-hydroxybenzoate (4HB) for the ubiquinone pathway. The sequence is that of Chorismate pyruvate-lyase from Salmonella schwarzengrund (strain CVM19633).